Here is a 297-residue protein sequence, read N- to C-terminus: Putative phosphate permease MJ0630 (297 aa).

Helical transmembrane passes span Ile-2 to Leu-22, Leu-45 to Ser-65, Val-67 to Leu-87, Thr-99 to Gly-119, Ile-121 to Ser-141, Ile-154 to Ser-174, Val-180 to Leu-200, Phe-225 to Val-245, and Asn-274 to Asn-294.

The protein belongs to the inorganic phosphate transporter (PiT) (TC 2.A.20) family.

It localises to the cell membrane. Potential transporter for phosphate. This is Putative phosphate permease MJ0630 from Methanocaldococcus jannaschii (strain ATCC 43067 / DSM 2661 / JAL-1 / JCM 10045 / NBRC 100440) (Methanococcus jannaschii).